The chain runs to 92 residues: DNA-directed RNA polymerase subunit omega (92 aa).

Belongs to the RNA polymerase subunit omega family. In terms of assembly, the RNAP catalytic core consists of 2 alpha, 1 beta, 1 beta' and 1 omega subunit. When a sigma factor is associated with the core the holoenzyme is formed, which can initiate transcription.

The enzyme catalyses RNA(n) + a ribonucleoside 5'-triphosphate = RNA(n+1) + diphosphate. Promotes RNA polymerase assembly. Latches the N- and C-terminal regions of the beta' subunit thereby facilitating its interaction with the beta and alpha subunits. This Acinetobacter baumannii (strain AB307-0294) protein is DNA-directed RNA polymerase subunit omega.